The sequence spans 188 residues: Archaemetzincin (188 aa).

His137 serves as a coordination point for Zn(2+). Glu138 acts as the Proton acceptor in catalysis. Zn(2+) contacts are provided by His141, His147, Cys148, Cys153, Cys172, and Cys175.

Belongs to the peptidase M54 family. As to quaternary structure, monomer. The cofactor is Zn(2+).

Its function is as follows. Probable zinc metalloprotease whose natural substrate is unknown. The protein is Archaemetzincin of Pyrococcus abyssi (strain GE5 / Orsay).